A 566-amino-acid polypeptide reads, in one-letter code: MTTREYDYIICGAGSAGNVLATRLTEDPNVTVLLLEAGGPDYRFDFRTQMPAALAYPLQGRRYNWAYETDPEPHMDNRRMECGRGKGLGGSSLINGMCYIRGNALDYDNWSTHKGLENWTYLDCLPYFKKAETRDVGPNDYHGGNGPVSVTTSKPGANPLFEAMVDAGVQAGYPRTDDLNGYQQEGFGPMDRTVTPKGRRASTARGYLDQAKGRPNLEIVTHALADRILFDGKRASGVTYLRGSERASAHARREVLVCSGAIASPQLLQRSGVGPGAWLKELDIPIVLDLPGVGQNLQDHLEMYIQYECKEPVSLYPALKWWNQPKIGLEWMLNGTGLGASNHFEAGGFIRTRDDDPWPNIQYHFLPVAINYNGSNAIEMHGFQAHVGSMRSPSRGRVKLRSRDPNAHPSILFNYMAEALDWREFRDAIRATREIMRQPALDRYRGRELNPGADCKSDKELDTFVRARAETAFHPSCSCKMGYDDMAVVDEEGRVHGLEGLRVVDASIMPIITTGNLNAPTIMIAEKIADKIRGRQPLARVDVPYFVANGAMARNVAKAVRQPETV.

7-36 (DYIICGAGSAGNVLATRLTEDPNVTVLLLE) is an FAD binding site. The tract at residues 183–203 (QQEGFGPMDRTVTPKGRRAST) is disordered. Histidine 474 functions as the Proton acceptor in the catalytic mechanism.

Belongs to the GMC oxidoreductase family. FAD serves as cofactor.

The enzyme catalyses choline + A = betaine aldehyde + AH2. It carries out the reaction betaine aldehyde + NAD(+) + H2O = glycine betaine + NADH + 2 H(+). It participates in amine and polyamine biosynthesis; betaine biosynthesis via choline pathway; betaine aldehyde from choline (cytochrome c reductase route): step 1/1. Its function is as follows. Involved in the biosynthesis of the osmoprotectant glycine betaine. Catalyzes the oxidation of choline to betaine aldehyde and betaine aldehyde to glycine betaine at the same rate. The chain is Oxygen-dependent choline dehydrogenase from Burkholderia ambifaria (strain ATCC BAA-244 / DSM 16087 / CCUG 44356 / LMG 19182 / AMMD) (Burkholderia cepacia (strain AMMD)).